Reading from the N-terminus, the 202-residue chain is Imidazoleglycerol-phosphate dehydratase (202 aa).

This sequence belongs to the imidazoleglycerol-phosphate dehydratase family.

The protein resides in the cytoplasm. The enzyme catalyses D-erythro-1-(imidazol-4-yl)glycerol 3-phosphate = 3-(imidazol-4-yl)-2-oxopropyl phosphate + H2O. It participates in amino-acid biosynthesis; L-histidine biosynthesis; L-histidine from 5-phospho-alpha-D-ribose 1-diphosphate: step 6/9. This Corynebacterium glutamicum (strain ATCC 13032 / DSM 20300 / JCM 1318 / BCRC 11384 / CCUG 27702 / LMG 3730 / NBRC 12168 / NCIMB 10025 / NRRL B-2784 / 534) protein is Imidazoleglycerol-phosphate dehydratase.